The sequence spans 2148 residues: Polyketide synthase 1 (2148 aa).

The segment at 19–261 (FIFGDQSSCN…TPLAVHAPYH (243 aa)) is N-terminal acylcarrier protein transacylase domain (SAT). A Ketosynthase family 3 (KS3) domain is found at 394 to 829 (DSKIAIIGMS…GGNTALLVED (436 aa)). Residues C566, H701, and H745 each act as for beta-ketoacyl synthase activity in the active site. The interval 929–1233 (AFVFSGQGSQ…PSLMRNKDGW (305 aa)) is malonyl-CoA:ACP transacylase (MAT) domain. The For acyl/malonyl transferase activity role is filled by S1018. The product template (PT) domain stretch occupies residues 1310–1624 (TASVHRIVHE…RKVLNTAMPP (315 aa)). The tract at residues 1314 to 1447 (HRIVHESVDK…SSLHFEQPKV (134 aa)) is N-terminal hotdog fold. Residues 1314 to 1619 (HRIVHESVDK…FQGIPRKVLN (306 aa)) enclose the PKS/mFAS DH domain. Catalysis depends on H1346, which acts as the Proton acceptor; for dehydratase activity. The interval 1474 to 1619 (LNSRMSSGVI…FQGIPRKVLN (146 aa)) is C-terminal hotdog fold. Catalysis depends on D1533, which acts as the Proton donor; for dehydratase activity. The interval 1619–1655 (NTAMPPPKSQNEAQVHSSPAKSRPKPPGSASSVHSGR) is disordered. The span at 1627 to 1638 (SQNEAQVHSSPA) shows a compositional bias: polar residues. Residues 1678–1752 (RDPMQALFKI…DLATHLGFDT (75 aa)) enclose the Carrier 1 domain. Position 1712 is an O-(pantetheine 4'-phosphoryl)serine (S1712). The span at 1756-1769 (DQSSGQSSSCGGLS) shows a compositional bias: low complexity. The interval 1756-1796 (DQSSGQSSSCGGLSPRSDSTGEITSNATTPPSLSPRGSVSG) is disordered. The segment covering 1771-1796 (RSDSTGEITSNATTPPSLSPRGSVSG) has biased composition (polar residues). In terms of domain architecture, Carrier 2 spans 1793 to 1870 (SVSGSQCKDV…SFKHMFQQGH (78 aa)). S1830 carries the O-(pantetheine 4'-phosphoryl)serine modification. The thioesterase (TE) domain stretch occupies residues 1882–2146 (LKQYRATSTL…ERVAAFIRST (265 aa)). S1973 functions as the For thioesterase activity in the catalytic mechanism.

Polyketide synthase; part of the Pks1 gene cluster that mediates the biosynthesis of an anthraquinone derivative pigment that contributes to conidial pigmentation that provides protection from UV radiation, heat and cold stress. The polyketide synthase Pks1 produces 1-acetyl-2,4,6,8-tetrahydroxy-9,10-anthraquinone though condensation of acetyl-CoA with malonyl-CoA. The dehydratase EthD and the laccase Mlac1 further convert the anthraquinone derivative into the final conidial pigment. This is Polyketide synthase 1 from Metarhizium acridum (strain CQMa 102).